The chain runs to 23 residues: Lycosin-II (23 aa).

Leu-21 is modified (leucine amide).

In terms of tissue distribution, expressed by the venom gland.

The protein localises to the secreted. The protein resides in the target cell membrane. Has strong antibacterial activity and biofilm inhibition effects against Gram-positive and -negative bacteria including E.coli, S.epidermidis, and A.baumannii and oxacillin-resistant S.aureus and meropenem-resistant P.aeruginosa. Is not cytotoxic against human foreskin fibroblast Hs27 or hemolytic against mammalian red blood cells. Its mechanism of action involves binding to lipoteichoic acid and lipopolysaccharide of Gram-positive and Gram-negative bacterial membranes, respectively, to destroy the bacterial membrane. In addition, it shows anti-inflammatory effects by inhibiting the expression of pro-inflammatory cytokines that are increased during bacterial infection in Hs27 cells. In Lycosa singoriensis (Wolf spider), this protein is Lycosin-II.